The chain runs to 114 residues: Large ribosomal subunit protein bL20c (114 aa).

This sequence belongs to the bacterial ribosomal protein bL20 family.

It localises to the plastid. Its subcellular location is the chloroplast. Its function is as follows. Binds directly to 23S ribosomal RNA and is necessary for the in vitro assembly process of the 50S ribosomal subunit. It is not involved in the protein synthesizing functions of that subunit. The chain is Large ribosomal subunit protein bL20c (rpl20) from Guillardia theta (Cryptophyte).